Here is a 180-residue protein sequence, read N- to C-terminus: Large ribosomal subunit protein uL5 (180 aa).

This sequence belongs to the universal ribosomal protein uL5 family. Part of the 50S ribosomal subunit; part of the 5S rRNA/L5/L18/L25 subcomplex. Contacts the 5S rRNA and the P site tRNA. Forms a bridge to the 30S subunit in the 70S ribosome.

Its function is as follows. This is one of the proteins that bind and probably mediate the attachment of the 5S RNA into the large ribosomal subunit, where it forms part of the central protuberance. In the 70S ribosome it contacts protein S13 of the 30S subunit (bridge B1b), connecting the 2 subunits; this bridge is implicated in subunit movement. Contacts the P site tRNA; the 5S rRNA and some of its associated proteins might help stabilize positioning of ribosome-bound tRNAs. The chain is Large ribosomal subunit protein uL5 from Streptococcus uberis (strain ATCC BAA-854 / 0140J).